A 172-amino-acid polypeptide reads, in one-letter code: Carotene biosynthesis-related protein CBR, chloroplastic (172 aa).

The segment at 41 to 66 is disordered; that stretch reads AENNPSTPPPSSPSPPPPPPTPAAPT. Residues 46–63 show a composition bias toward pro residues; sequence STPPPSSPSPPPPPPTPA. The next 2 membrane-spanning stretches (helical) occupy residues 111–131 and 152–172; these read PTLI…PAFA and FAMI…IALF.

This sequence belongs to the ELIP/psbS family.

It localises to the plastid. It is found in the chloroplast membrane. Putative zeaxanthin binding protein. That forms photoprotective complexes within the light-harvesting antennae. The protein is Carotene biosynthesis-related protein CBR, chloroplastic (CBR) of Dunaliella salina (Green alga).